A 427-amino-acid polypeptide reads, in one-letter code: MTEAMKITLSTQPADARWGDKATYSINNDGITLHLNGKDDLGLIQRAARKIDGLGIKQVALTGEGWDTERCWAFWAGYKGPKGVRTVMWPDLDDAQRQELDNRLTIIDWVRDTINAPAEELGPEQLAQRAVDLLCSVACDSVTYRITKGEDLREQNYMGLHTVGRGSERPPVLLALDYNPTGDKDAPVYACLVGKGITFDSGGYSIKQSAFMDSMKSDMGGAATVTGALAFAITRGLNKRVKLFLCCADNLISGNAFKLGDIIRYRNGKNVEVMNTDAEGRLVLADGLIDASAQHPQLIIDMATLTGAAKTALGNDYHALFSFDDTLAGRLLTSAAQENEPFWRLPLAEFHRNQLPSNFAELNNTGSAAYPAGASTAAGFLSHFVENYREGWLHIDCSATYRKAPVEQWAAGATGLGVRTIANLLTA.

K195 and D200 together coordinate Mn(2+). K207 is an active-site residue. D218, D277, and E279 together coordinate Mn(2+). The active site involves R281.

Belongs to the peptidase M17 family. In terms of assembly, homohexamer. Mn(2+) serves as cofactor.

The protein localises to the cytoplasm. It carries out the reaction Release of an N-terminal amino acid, Xaa, from a peptide or arylamide. Xaa is preferably Glu or Asp but may be other amino acids, including Leu, Met, His, Cys and Gln.. In terms of biological role, probably plays an important role in intracellular peptide degradation. The polypeptide is Peptidase B (Salmonella agona (strain SL483)).